The primary structure comprises 72 residues: Protein Kish (72 aa).

The first 26 residues, 1 to 26, serve as a signal peptide directing secretion; it reads MSALFNFRSLLQVILLLICSCSYVHG. Residues 27–53 are Lumenal-facing; the sequence is QWPSLLDRYKNHEVLGAFWKMARVGER. The chain crosses the membrane as a helical span at residues 54 to 72; sequence ASPYVSLACILMAISQFNS.

Belongs to the KISH family.

Its subcellular location is the endoplasmic reticulum membrane. The protein resides in the golgi apparatus membrane. Involved in the early part of the secretory pathway. This chain is Protein Kish, found in Saccharomyces cerevisiae (strain ATCC 204508 / S288c) (Baker's yeast).